A 188-amino-acid chain; its full sequence is Large ribosomal subunit protein uL10 (188 aa).

The protein belongs to the universal ribosomal protein uL10 family. Part of the ribosomal stalk of the 50S ribosomal subunit. The N-terminus interacts with L11 and the large rRNA to form the base of the stalk. The C-terminus forms an elongated spine to which L12 dimers bind in a sequential fashion forming a multimeric L10(L12)X complex.

Functionally, forms part of the ribosomal stalk, playing a central role in the interaction of the ribosome with GTP-bound translation factors. The sequence is that of Large ribosomal subunit protein uL10 from Crocosphaera subtropica (strain ATCC 51142 / BH68) (Cyanothece sp. (strain ATCC 51142)).